A 90-amino-acid chain; its full sequence is Small ribosomal subunit protein bS16 (90 aa).

This sequence belongs to the bacterial ribosomal protein bS16 family. Part of the 30S ribosomal subunit.

In Bacillus subtilis (strain 168), this protein is Small ribosomal subunit protein bS16.